A 229-amino-acid polypeptide reads, in one-letter code: Chloride conductance regulatory protein ICln (229 aa).

It belongs to the pICln (TC 1.A.47) family. In terms of assembly, homooligomer.

The protein localises to the cytoplasm. It is found in the nucleus. Functionally, may participate in cellular volume control by activation of a swelling-induced chloride conductance pathway. This is Chloride conductance regulatory protein ICln from Arabidopsis thaliana (Mouse-ear cress).